Here is a 758-residue protein sequence, read N- to C-terminus: Amyloid beta precursor protein binding family B member 2 (758 aa).

Ser123 carries the phosphoserine modification. Positions 134 to 154 (KLEGKEPHPQDSSSCEILPSQ) are disordered. Ser160 is modified (phosphoserine). Positions 176 to 190 (EQNRGNHHGTAEEKS) are enriched in basic and acidic residues. Disordered regions lie at residues 176-195 (EQNR…PVQG), 206-295 (LLLQ…LPPG), and 326-351 (DLQG…KQPW). Composition is skewed to polar residues over residues 212–230 (NRPQ…SSSP) and 261–275 (SWTT…PSSP). Residues 290-322 (PDLPPGWKRVSDIAGTYYWHIPTGTTQWERPVS) enclose the WW domain. Over residues 331–340 (RKGSLSSVTP) the composition is skewed to polar residues. Residues Ser334, Ser409, and Ser412 each carry the phosphoserine modification. PID domains lie at 413-578 (DPEA…LQVD) and 584-736 (TELV…VTTN).

As to quaternary structure, interacts (via C-terminus) with APP (via C-terminus). Interacts with APLP2 (via cytoplasmic domain). Widely expressed.

The protein resides in the endoplasmic reticulum. Its subcellular location is the golgi apparatus. The protein localises to the early endosome. Plays a role in the maintenance of lens transparency, and may also play a role in muscle cell strength. Involved in hippocampal neurite branching and neuromuscular junction formation, as a result plays a role in spatial memory functioning. Activates transcription of APP. The protein is Amyloid beta precursor protein binding family B member 2 of Homo sapiens (Human).